The primary structure comprises 100 residues: NADH-quinone oxidoreductase subunit K (100 aa).

The next 3 membrane-spanning stretches (helical) occupy residues 4 to 24, 28 to 48, and 60 to 80; these read LQHG…GLLI, LLFM…AFVV, and VMYI…LALL.

Belongs to the complex I subunit 4L family. NDH-1 is composed of 13 different subunits. Subunits NuoA, H, J, K, L, M, N constitute the membrane sector of the complex.

The protein resides in the cell inner membrane. It catalyses the reaction a quinone + NADH + 5 H(+)(in) = a quinol + NAD(+) + 4 H(+)(out). NDH-1 shuttles electrons from NADH, via FMN and iron-sulfur (Fe-S) centers, to quinones in the respiratory chain. The immediate electron acceptor for the enzyme in this species is believed to be ubiquinone. Couples the redox reaction to proton translocation (for every two electrons transferred, four hydrogen ions are translocated across the cytoplasmic membrane), and thus conserves the redox energy in a proton gradient. This Yersinia pseudotuberculosis serotype O:1b (strain IP 31758) protein is NADH-quinone oxidoreductase subunit K.